The following is a 519-amino-acid chain: NADH-quinone oxidoreductase subunit N (519 aa).

A run of 13 helical transmembrane segments spans residues 14-34 (LLPAIIMVVGASILLLSEVFL), 44-64 (AVLTVVTAVAAGAMALTTMFE), 82-102 (FLTFVVCVGLGLATLSSVSFL), 117-137 (LFASAGMSLLAMSNELITLFV), 167-187 (FILGAFSSAVLLYGAALLYGA), 209-229 (GLVYAGIILVITGFAFKVAAV), 249-269 (LMSVGVKAAAFAAMVRVFFMV), 278-298 (LLGLFSVLAFLTMVAGNLLAI), 307-327 (LAYSSIAHAGYLLVGVAALFV), 359-379 (ILYYLLAYTFSAVGAFAIVSV), 407-427 (WAFAMAAFMLSLGGIPPTIGF), 431-451 (LLIFQAAVDAGLIGLTIVGVL), and 487-507 (LALVLSTAAVVILGIIPGPIM).

It belongs to the complex I subunit 2 family. In terms of assembly, NDH-1 is composed of 14 different subunits. Subunits NuoA, H, J, K, L, M, N constitute the membrane sector of the complex.

It is found in the cell inner membrane. The catalysed reaction is a quinone + NADH + 5 H(+)(in) = a quinol + NAD(+) + 4 H(+)(out). Its function is as follows. NDH-1 shuttles electrons from NADH, via FMN and iron-sulfur (Fe-S) centers, to quinones in the respiratory chain. The immediate electron acceptor for the enzyme in this species is believed to be ubiquinone. Couples the redox reaction to proton translocation (for every two electrons transferred, four hydrogen ions are translocated across the cytoplasmic membrane), and thus conserves the redox energy in a proton gradient. This chain is NADH-quinone oxidoreductase subunit N, found in Myxococcus xanthus (strain DK1622).